The sequence spans 330 residues: Ketol-acid reductoisomerase (NADP(+)) (330 aa).

Residues 3–184 (LPVYYDKDID…GGGRMGVLET (182 aa)) form the KARI N-terminal Rossmann domain. NADP(+)-binding positions include 26-29 (YGAQ), Ser52, and Ser54. The active site involves His109. Residue Gly135 participates in NADP(+) binding. A KARI C-terminal knotted domain is found at 185–329 (SFKEECESDL…EILRAPFNHK (145 aa)). The Mg(2+) site is built by Asp193, Glu197, Glu229, and Glu233. Residue Ser254 participates in substrate binding.

It belongs to the ketol-acid reductoisomerase family. Mg(2+) is required as a cofactor.

It carries out the reaction (2R)-2,3-dihydroxy-3-methylbutanoate + NADP(+) = (2S)-2-acetolactate + NADPH + H(+). The catalysed reaction is (2R,3R)-2,3-dihydroxy-3-methylpentanoate + NADP(+) = (S)-2-ethyl-2-hydroxy-3-oxobutanoate + NADPH + H(+). It participates in amino-acid biosynthesis; L-isoleucine biosynthesis; L-isoleucine from 2-oxobutanoate: step 2/4. It functions in the pathway amino-acid biosynthesis; L-valine biosynthesis; L-valine from pyruvate: step 2/4. Involved in the biosynthesis of branched-chain amino acids (BCAA). Catalyzes an alkyl-migration followed by a ketol-acid reduction of (S)-2-acetolactate (S2AL) to yield (R)-2,3-dihydroxy-isovalerate. In the isomerase reaction, S2AL is rearranged via a Mg-dependent methyl migration to produce 3-hydroxy-3-methyl-2-ketobutyrate (HMKB). In the reductase reaction, this 2-ketoacid undergoes a metal-dependent reduction by NADPH to yield (R)-2,3-dihydroxy-isovalerate. In Helicobacter pylori (strain ATCC 700392 / 26695) (Campylobacter pylori), this protein is Ketol-acid reductoisomerase (NADP(+)).